The following is a 327-amino-acid chain: Tartrate-resistant acid phosphatase type 5 (327 aa).

A signal peptide spans 1 to 22; it reads MDTWMVLLGLQILLLPLLAHCT. 4 residues coordinate Fe cation: Asp35, Asp73, Tyr76, and Asn112. N-linked (GlcNAc...) asparagine glycosylation is found at Asn118 and Asn149. A disulfide bridge connects residues Cys163 and Cys221. The Fe cation site is built by His207, His242, and His244.

In terms of assembly, exists either as monomer or, after proteolytic processing, as a dimer of two chains linked by disulfide bond(s). It depends on Fe cation as a cofactor. In terms of tissue distribution, characteristic constituent of osteoclasts and some mononuclear preosteoclasts. Preferentially expressed in skeletal tissues.

The protein resides in the lysosome. The catalysed reaction is a phosphate monoester + H2O = an alcohol + phosphate. In terms of biological role, may play a role in the process of bone resorption. The osteoclastic trap acts on nucleotide tri- and diphosphates with higher affinity, compared with other substrates. In Rattus norvegicus (Rat), this protein is Tartrate-resistant acid phosphatase type 5 (Acp5).